Here is a 1104-residue protein sequence, read N- to C-terminus: Lon protease homolog, mitochondrial (1104 aa).

A mitochondrion-targeting transit peptide spans 1–58 (MLPLRAFARLAQRPRLSRPTQLARSSLPRPSPSRPAAHYLALAPAPSTRFLHSSPPVL). The segment at 8-144 (ARLAQRPRLS…PGAGGPKEVA (137 aa)) is disordered. The segment covering 22-46 (LARSSLPRPSPSRPAAHYLALAPAP) has biased composition (low complexity). Positions 80–103 (KQDDQVEKPLPDAESSKSAEERAK) are enriched in basic and acidic residues. Low complexity predominate over residues 104–128 (SQSSKPDIKASSSDSVSSSAPAPGS). Residues 129–139 (ADGGSPPGAGG) are compositionally biased toward gly residues. A Lon N-terminal domain is found at 155–444 (VLAIPITHRP…RALVLLKKEL (290 aa)). 597–604 (GPPGVGKT) contacts ATP. Residues 895–1082 (SPPAGVSTGL…RQVLHEAFRG (188 aa)) enclose the Lon proteolytic domain. Catalysis depends on residues Ser-987 and Lys-1030.

It belongs to the peptidase S16 family. In terms of assembly, homohexamer or homoheptamer. Organized in a ring with a central cavity.

It is found in the mitochondrion matrix. It catalyses the reaction Hydrolysis of proteins in presence of ATP.. ATP-dependent serine protease that mediates the selective degradation of misfolded, unassembled or oxidatively damaged polypeptides as well as certain short-lived regulatory proteins in the mitochondrial matrix. May also have a chaperone function in the assembly of inner membrane protein complexes. Participates in the regulation of mitochondrial gene expression and in the maintenance of the integrity of the mitochondrial genome. Binds to mitochondrial DNA in a site-specific manner. The chain is Lon protease homolog, mitochondrial from Cryptococcus neoformans var. neoformans serotype D (strain B-3501A) (Filobasidiella neoformans).